We begin with the raw amino-acid sequence, 117 residues long: Large ribosomal subunit protein bL19 (117 aa).

It belongs to the bacterial ribosomal protein bL19 family.

Functionally, this protein is located at the 30S-50S ribosomal subunit interface and may play a role in the structure and function of the aminoacyl-tRNA binding site. The chain is Large ribosomal subunit protein bL19 from Cutibacterium acnes (strain DSM 16379 / KPA171202) (Propionibacterium acnes).